Consider the following 925-residue polypeptide: GPI ethanolamine phosphate transferase 1 (925 aa).

The Cytoplasmic segment spans residues 1-6 (MWNKHR). Residues 7-27 (LAFILVGLLFHLFYLRSIFDI) traverse the membrane as a helical segment. At 28–457 (YFVSPLVHGM…TTYNWRFIRS (430 aa)) the chain is on the lumenal side. Asn90, Asn138, Asn198, Asn286, Asn312, and Asn358 each carry an N-linked (GlcNAc...) asparagine glycan. The chain crosses the membrane as a helical span at residues 458–478 (IVTLGFIGWITYSFTIFLRLF). At 479-492 (ILEKQYAMKTSPQN) the chain is on the cytoplasmic side. The helical transmembrane segment at 493-510 (LASFGALTAALNYVLYYQ) threads the bilayer. Over 511–516 (RSPFNY) the chain is Lumenal. Residues 517–537 (YMYLLFPLFFWSQILTNSTIL) traverse the membrane as a helical segment. The Cytoplasmic portion of the chain corresponds to 538-547 (HDGIREMFKG). The helical transmembrane segment at 548–568 (VSMLQRIGICALIVSIYEGIV) threads the bilayer. Residues 569–574 (YGYFDR) are Lumenal-facing. The chain crosses the membrane as a helical span at residues 575–595 (WIFTIIFNLLALYPFFCGIKD). At 596–599 (AKTN) the chain is on the cytoplasmic side. The chain crosses the membrane as a helical span at residues 600–620 (MFWGANSMALSIFTLFDAVKI). Glu621 is a topological domain (lumenal). A helical membrane pass occupies residues 622-642 (SLTQINVSGLLLVASGLYALW). Over 643 to 653 (RVSKKINSHTK) the chain is Cytoplasmic. Residues 654 to 674 (IVILLQILLLAMMLAVTNKSV) traverse the membrane as a helical segment. Over 675–687 (TSLQQRAGLPTDA) the chain is Lumenal. A helical transmembrane segment spans residues 688–708 (KIAGWVILTLSLSLMPLLHYL). The Cytoplasmic portion of the chain corresponds to 709-719 (KPSNDYQVRVL). The chain crosses the membrane as a helical span at residues 720–740 (VIYLTFAPTFLILTISFESFF). At 741–775 (YLLFTNYLMLWIEIESKIKAQNIAKNSQNWLQLLR) the chain is on the lumenal side. The chain crosses the membrane as a helical span at residues 776-796 (ISIIGFFLLQFAFFGTGNVAS). Topologically, residues 797–818 (ISSFSLDSVYRLMPVFDPFPMG) are cytoplasmic. The chain crosses the membrane as a helical span at residues 819-839 (ALLILKIMIPYILLSTALGIM). Residues 840-848 (NLKLNIKDY) are Lumenal-facing. Residues 849-869 (TVSSLILSTSDVLSLNFFYLL) traverse the membrane as a helical segment. Residues 870–885 (RTEGSWLDIGVTISNY) lie on the Cytoplasmic side of the membrane. The helical transmembrane segment at 886–906 (CLAILSSLFMIVLELFSHFLL) threads the bilayer. The Lumenal segment spans residues 907–925 (KNVRDNGMDIAASKQQKRH).

Belongs to the PIGG/PIGN/PIGO family. PIGN subfamily.

The protein resides in the endoplasmic reticulum membrane. The protein operates within glycolipid biosynthesis; glycosylphosphatidylinositol-anchor biosynthesis. Functionally, ethanolamine phosphate transferase involved in glycosylphosphatidylinositol-anchor biosynthesis. Transfers ethanolamine phosphate to the first alpha-1,4-linked mannose of the glycosylphosphatidylinositol precursor of GPI-anchor. The sequence is that of GPI ethanolamine phosphate transferase 1 (MCD4) from Eremothecium gossypii (strain ATCC 10895 / CBS 109.51 / FGSC 9923 / NRRL Y-1056) (Yeast).